The chain runs to 421 residues: Signal recognition particle receptor FtsY (421 aa).

Residues 1–10 show a composition bias toward basic residues; it reads MFSFFRRKKK. The interval 1–22 is disordered; the sequence is MFSFFRRKKKQETPAPEEAQIQ. Residues 228–235, 309–313, and 373–376 each bind GTP; these read GINGAGKT, DTAGR, and TKLD.

Belongs to the GTP-binding SRP family. FtsY subfamily. As to quaternary structure, part of the signal recognition particle protein translocation system, which is composed of SRP and FtsY. SRP is a ribonucleoprotein composed of Ffh and a 4.5S RNA molecule.

The protein localises to the cell membrane. It localises to the cytoplasm. It carries out the reaction GTP + H2O = GDP + phosphate + H(+). Involved in targeting and insertion of nascent membrane proteins into the cytoplasmic membrane. Acts as a receptor for the complex formed by the signal recognition particle (SRP) and the ribosome-nascent chain (RNC). Interaction with SRP-RNC leads to the transfer of the RNC complex to the Sec translocase for insertion into the membrane, the hydrolysis of GTP by both Ffh and FtsY, and the dissociation of the SRP-FtsY complex into the individual components. The protein is Signal recognition particle receptor FtsY of Neisseria meningitidis serogroup C.